A 94-amino-acid chain; its full sequence is Exodeoxyribonuclease 7 small subunit (94 aa).

Belongs to the XseB family. As to quaternary structure, heterooligomer composed of large and small subunits.

Its subcellular location is the cytoplasm. It carries out the reaction Exonucleolytic cleavage in either 5'- to 3'- or 3'- to 5'-direction to yield nucleoside 5'-phosphates.. Its function is as follows. Bidirectionally degrades single-stranded DNA into large acid-insoluble oligonucleotides, which are then degraded further into small acid-soluble oligonucleotides. The protein is Exodeoxyribonuclease 7 small subunit of Trichormus variabilis (strain ATCC 29413 / PCC 7937) (Anabaena variabilis).